We begin with the raw amino-acid sequence, 297 residues long: Homoserine kinase (297 aa).

An ATP-binding site is contributed by 82–92 (PVSRGLGSSAA).

The protein belongs to the GHMP kinase family. Homoserine kinase subfamily.

It localises to the cytoplasm. It catalyses the reaction L-homoserine + ATP = O-phospho-L-homoserine + ADP + H(+). It functions in the pathway amino-acid biosynthesis; L-threonine biosynthesis; L-threonine from L-aspartate: step 4/5. In terms of biological role, catalyzes the ATP-dependent phosphorylation of L-homoserine to L-homoserine phosphate. This Clostridium botulinum (strain Kyoto / Type A2) protein is Homoserine kinase.